The following is a 192-amino-acid chain: MVRYNAVEDPLCYPGTHVLRNRANIPDQNELDEFEQLMFDSRAREALPDGDLDFAHYRALHRHFFQDVYEWAGQTRIIRTGKGENWFCYPEYIEREANRLFAELAARDHLARTESKEAFAKGASWFLAEINAIHPFREGNGRTQLVFLTMLTRYAGYELDESKLEPKRFLDAMIRSFSGDLAPLAAEIRRMI.

Positions 52–190 constitute a Fido domain; the sequence is LDFAHYRALH…LAPLAAEIRR (139 aa). Residues 82-83 and 139-141 each bind ATP; these read KG and GNG.

It belongs to the fic family.

It catalyses the reaction L-tyrosyl-[protein] + ATP = O-(5'-adenylyl)-L-tyrosyl-[protein] + diphosphate. The catalysed reaction is L-threonyl-[protein] + ATP = 3-O-(5'-adenylyl)-L-threonyl-[protein] + diphosphate. Functionally, probable adenylyltransferase that mediates the addition of adenosine 5'-monophosphate (AMP) to specific residues of target proteins. This Sinorhizobium fredii (strain NBRC 101917 / NGR234) protein is Probable protein adenylyltransferase y4lH.